Here is a 192-residue protein sequence, read N- to C-terminus: Mediator of RNA polymerase II transcription subunit 29 (192 aa).

The disordered stretch occupies residues 32–51 (MQQQSPQQMQPAPVPQQTQQ).

It belongs to the Mediator complex subunit 29 family. In terms of assembly, component of the Mediator complex.

Its subcellular location is the nucleus. In terms of biological role, component of the Mediator complex, a coactivator involved in the regulated transcription of nearly all RNA polymerase II-dependent genes. Mediator functions as a bridge to convey information from gene-specific regulatory proteins to the basal RNA polymerase II transcription machinery. Mediator is recruited to promoters by direct interactions with regulatory proteins and serves as a scaffold for the assembly of a functional preinitiation complex with RNA polymerase II and the general transcription factors. This chain is Mediator of RNA polymerase II transcription subunit 29 (ix), found in Bombyx mori (Silk moth).